Reading from the N-terminus, the 1363-residue chain is Vascular endothelial growth factor receptor 3 (1363 aa).

Positions 1 to 24 (MQPGAALNLRLWLCLGLLQGLANG) are cleaved as a signal peptide. Residues 25–775 (YSMTPPTLNI…EGSEDKGSME (751 aa)) are Extracellular-facing. N33, N104, N166, N251, N299, and N411 each carry an N-linked (GlcNAc...) asparagine glycan. Ig-like C2-type domains lie at 44-118 (GDSL…YIKA), 151-213 (KDSM…WGDQ), 230-326 (YDIQ…TEVI), 331-415 (PFIS…ISLE), 422-552 (PHIH…FYVT), 555-671 (PDGF…KYLS), and 678-764 (PRLT…ASVA). 2 disulfides stabilise this stretch: C51-C111 and C158-C206. C252 and C310 are disulfide-bonded. Cystine bridges form between C445/C534, C466/C486, and C578/C653. N-linked (GlcNAc...) asparagine glycosylation is found at N515, N527, N582, N594, N683, and N690. The cysteines at positions 699 and 751 are disulfide-linked. N-linked (GlcNAc...) asparagine glycosylation occurs at N758. The chain crosses the membrane as a helical span at residues 776–796 (IVILIGTGVIAVFFWVLLLLI). Residues 797–1363 (FCNMKRPAHA…GSTFFADSSY (567 aa)) are Cytoplasmic-facing. Phosphotyrosine; by SRC is present on residues Y830 and Y833. Residues 845 to 1173 (LHLGRVLGHG…DLVEILGDLL (329 aa)) form the Protein kinase domain. Residues 851 to 859 (LGHGAFGKV) and K879 each bind ATP. D1037 serves as the catalytic Proton acceptor. Position 1063 is a phosphotyrosine; by autocatalysis and SRC (Y1063). Y1068, Y1230, Y1231, and Y1265 each carry phosphotyrosine; by autocatalysis. Positions 1288–1330 (ESRHRPEGSFSCKGPGQHMDIPRGHPDPQGRRRRPTQGAQGGK) are disordered. Positions 1307-1317 (DIPRGHPDPQG) are enriched in basic and acidic residues. 2 positions are modified to phosphotyrosine; by autocatalysis and SRC: Y1333 and Y1337. Y1363 is modified (phosphotyrosine; by autocatalysis).

Belongs to the protein kinase superfamily. Tyr protein kinase family. CSF-1/PDGF receptor subfamily. In terms of assembly, interacts with VEGFC and VEGFD. Monomer in the absence of bound VEGFC or VEGFD. Homodimer in the presence of bound VEGFC or VEGFD. Can also form a heterodimer with KDR. Interacts with PTPN14; the interaction is enhanced by stimulation with VEGFC. Interacts with CRK, GRB2, PTK2/FAK1, SHC1, PIK3R1 and PTPN11/SHP-2. Identified in a complex with SRC and ITGB1. Autophosphorylated on tyrosine residues upon ligand binding. Autophosphorylation occurs in trans, i.e. one subunit of the dimeric receptor phosphorylates tyrosine residues on the other subunit. Phosphorylation in response to H(2)O(2) is mediated by a process that requires SRC and PRKCD activity. Phosphorylation at Tyr-1068 is required for autophosphorylation at additional tyrosine residues. Phosphorylation at Tyr-1063 and Tyr-1337 is important for interaction with CRK and subsequent activation of MAPK8. Phosphorylation at Tyr-1230, Tyr-1231 and Tyr-1337 is important for interaction with GRB2 and subsequent activation of the AKT1 and MAPK1/ERK2 and/or MAPK3/ERK1 signaling pathways. In response to endothelial cell adhesion onto collagen, can also be phosphorylated in the absence of FLT4 kinase activity by SRC. In terms of tissue distribution, expressed in adult lung and liver, and in fetal liver, brain, intestine and placenta.

The protein resides in the cell membrane. Its subcellular location is the cytoplasm. It is found in the nucleus. It carries out the reaction L-tyrosyl-[protein] + ATP = O-phospho-L-tyrosyl-[protein] + ADP + H(+). With respect to regulation, present in an inactive conformation in the absence of bound ligand. Binding of VEGFC or VEGFD leads to dimerization and activation by autophosphorylation on tyrosine residues. Its function is as follows. Tyrosine-protein kinase that acts as a cell-surface receptor for VEGFC and VEGFD, and plays an essential role in adult lymphangiogenesis and in the development of the vascular network and the cardiovascular system during embryonic development. Promotes proliferation, survival and migration of endothelial cells, and regulates angiogenic sprouting. Signaling by activated FLT4 leads to enhanced production of VEGFC, and to a lesser degree VEGFA, thereby creating a positive feedback loop that enhances FLT4 signaling. Modulates KDR signaling by forming heterodimers. Mediates activation of the MAPK1/ERK2, MAPK3/ERK1 signaling pathway, of MAPK8 and the JUN signaling pathway, and of the AKT1 signaling pathway. Phosphorylates SHC1. Mediates phosphorylation of PIK3R1, the regulatory subunit of phosphatidylinositol 3-kinase. Promotes phosphorylation of MAPK8 at 'Thr-183' and 'Tyr-185', and of AKT1 at 'Ser-473'. The polypeptide is Vascular endothelial growth factor receptor 3 (Flt4) (Mus musculus (Mouse)).